The chain runs to 133 residues: Otoraplin (133 aa).

Positions 1 to 23 (MAKTFYVVVIVLCLGFIHQKAYG) are cleaved as a signal peptide. Cystine bridges form between Cys35–Cys40 and Cys58–Cys132. The SH3 domain maps to 42–115 (YAISFGRAED…PSSLVTELTV (74 aa)).

Belongs to the MIA/OTOR family.

The protein localises to the secreted. This is Otoraplin (OTOR) from Aquarana catesbeiana (American bullfrog).